Here is a 706-residue protein sequence, read N- to C-terminus: Polyribonucleotide nucleotidyltransferase (706 aa).

Mg(2+) contacts are provided by Asp487 and Asp493. Residues 554 to 613 (PRIHTMKISSDKIKDVIGKGGAVIRALCEETGTTIEIEDDGTIKIAATEGAAAKEAIRRI) enclose the KH domain. An S1 motif domain is found at 623–691 (GRIYQGKVAR…RQGRVRLSMK (69 aa)).

Belongs to the polyribonucleotide nucleotidyltransferase family. As to quaternary structure, component of the RNA degradosome, which is a multiprotein complex involved in RNA processing and mRNA degradation. It depends on Mg(2+) as a cofactor.

It is found in the cytoplasm. The enzyme catalyses RNA(n+1) + phosphate = RNA(n) + a ribonucleoside 5'-diphosphate. In terms of biological role, involved in mRNA degradation. Catalyzes the phosphorolysis of single-stranded polyribonucleotides processively in the 3'- to 5'-direction. The polypeptide is Polyribonucleotide nucleotidyltransferase (Vibrio atlanticus (strain LGP32) (Vibrio splendidus (strain Mel32))).